A 140-amino-acid chain; its full sequence is Nucleoside diphosphate kinase (140 aa).

Residues Lys-11, Phe-59, Arg-87, Thr-93, Arg-104, and Asn-114 each contribute to the ATP site. The active-site Pros-phosphohistidine intermediate is the His-117.

The protein belongs to the NDK family. Homotetramer. Mg(2+) is required as a cofactor.

Its subcellular location is the cytoplasm. It catalyses the reaction a 2'-deoxyribonucleoside 5'-diphosphate + ATP = a 2'-deoxyribonucleoside 5'-triphosphate + ADP. It carries out the reaction a ribonucleoside 5'-diphosphate + ATP = a ribonucleoside 5'-triphosphate + ADP. Its function is as follows. Major role in the synthesis of nucleoside triphosphates other than ATP. The ATP gamma phosphate is transferred to the NDP beta phosphate via a ping-pong mechanism, using a phosphorylated active-site intermediate. The protein is Nucleoside diphosphate kinase of Brucella melitensis biotype 1 (strain ATCC 23456 / CCUG 17765 / NCTC 10094 / 16M).